A 92-amino-acid polypeptide reads, in one-letter code: uncharacterized protein (92 aa).

This is an uncharacterized protein from Enterobacteria phage T4 (Bacteriophage T4).